An 86-amino-acid polypeptide reads, in one-letter code: Small muscular protein (86 aa).

Residues 20-64 (MGAFRPGAGQPPRRKECTPEVEEGVPPTSDEEKKPIPGAKKLPGP) form a disordered region.

The protein belongs to the SMPX family.

Plays a role in the regulatory network through which muscle cells coordinate their structural and functional states during growth, adaptation, and repair. The sequence is that of Small muscular protein (SMPX) from Pongo abelii (Sumatran orangutan).